Reading from the N-terminus, the 369-residue chain is MAEATTCNMENFVAKLANGMSLRTPIEDVNSAPPEGGVKTNAEDMTSKDYYFDSYAHFGIHEEMLKDEVRTLTYRNSMFHNRHLFKDKVVLDVGSGTGILCMFAAKAGAKKVIGIECSSISDYAIKIVKANKLDHVVTIIKGKVEEVELPVEKVDIIISEWMGYCLFYESMLNTVIYARDKWLTPDGLIFPDRATLYITAIEDRQYKDYKIHWWENVYGFDMSCIKDVAIKEPLVDVVDPKQLVSNACLIKEVDIYTVKVDDLSFTSPFCLQVKRNDYIHALVAYFNIEFTRCHKRTGFSTSPESPYTHWKQTVFYMEDYLTVKTGEEIFGTIGMKPNAKNNRDLDFTFDIDFKGQLCELSCSTDYRMR.

In terms of domain architecture, SAM-dependent MTase PRMT-type spans 48–369 (KDYYFDSYAH…LSCSTDYRMR (322 aa)). Residues His-61, Arg-70, Gly-94, Glu-116, and Glu-145 each contribute to the S-adenosyl-L-methionine site. Catalysis depends on residues Glu-160 and Glu-169.

Belongs to the class I-like SAM-binding methyltransferase superfamily. Protein arginine N-methyltransferase family. In terms of assembly, homodimer. Homooctamer; individual homodimers associates to form a homooctamer and homooligomerization is required for proper localization to the cell membrane. Individual homodimers can associate to form a homohexamer. Component of a complex with lsm14a/rap55a. Interacts with cirbp.

It localises to the nucleus. It is found in the nucleoplasm. The protein localises to the cytoplasm. Its subcellular location is the cytosol. It catalyses the reaction L-arginyl-[protein] + 2 S-adenosyl-L-methionine = N(omega),N(omega)-dimethyl-L-arginyl-[protein] + 2 S-adenosyl-L-homocysteine + 2 H(+). The catalysed reaction is L-arginyl-[protein] + S-adenosyl-L-methionine = N(omega)-methyl-L-arginyl-[protein] + S-adenosyl-L-homocysteine + H(+). It carries out the reaction N(omega)-methyl-L-arginyl-[protein] + S-adenosyl-L-methionine = N(omega),N(omega)-dimethyl-L-arginyl-[protein] + S-adenosyl-L-homocysteine + H(+). Its function is as follows. Arginine methyltransferase that methylates (mono and asymmetric dimethylation) the guanidino nitrogens of arginyl residues present in target proteins. Constitutes the main enzyme that mediates monomethylation and asymmetric dimethylation of histone H4 'Arg-4' (H4R3me1 and H4R3me2a, respectively), a specific tag for epigenetic transcriptional activation. Methylates cirbp to regulate its subcellular location. Acts transiently during metamorphosis as a transcription coactivator, enhancing thyroid hormone (T3) receptor (TR)-mediated transcription by enhancing TR binding to the T3 response element (TRE), and histone modification through recruitment of other coactivators. This is Protein arginine N-methyltransferase 1-A (prmt1-a) from Xenopus laevis (African clawed frog).